The chain runs to 41 residues: Photosystem II reaction center protein L (41 aa).

Residues 20-40 form a helical membrane-spanning segment; the sequence is SLYWGLLLIFVLAVPFSNYFF.

Belongs to the PsbL family. As to quaternary structure, PSII is composed of 1 copy each of membrane proteins PsbA, PsbB, PsbC, PsbD, PsbE, PsbF, PsbH, PsbI, PsbJ, PsbK, PsbL, PsbM, PsbT, PsbX, PsbY, PsbZ, Psb30/Ycf12, at least 3 peripheral proteins of the oxygen-evolving complex and a large number of cofactors. It forms dimeric complexes.

It localises to the plastid. The protein localises to the chloroplast thylakoid membrane. Functionally, one of the components of the core complex of photosystem II (PSII). PSII is a light-driven water:plastoquinone oxidoreductase that uses light energy to abstract electrons from H(2)O, generating O(2) and a proton gradient subsequently used for ATP formation. It consists of a core antenna complex that captures photons, and an electron transfer chain that converts photonic excitation into a charge separation. This subunit is found at the monomer-monomer interface and is required for correct PSII assembly and/or dimerization. This is Photosystem II reaction center protein L from Pinus koraiensis (Korean pine).